Reading from the N-terminus, the 253-residue chain is Probable transcriptional regulatory protein KRH_13670 (253 aa).

It belongs to the TACO1 family.

It localises to the cytoplasm. The chain is Probable transcriptional regulatory protein KRH_13670 from Kocuria rhizophila (strain ATCC 9341 / DSM 348 / NBRC 103217 / DC2201).